The primary structure comprises 187 residues: Large ribosomal subunit protein uL5 (187 aa).

It belongs to the universal ribosomal protein uL5 family. In terms of assembly, part of the 50S ribosomal subunit; part of the 5S rRNA/L5/L18/L25 subcomplex. Contacts the 5S rRNA and the P site tRNA. Forms a bridge to the 30S subunit in the 70S ribosome.

In terms of biological role, this is one of the proteins that bind and probably mediate the attachment of the 5S RNA into the large ribosomal subunit, where it forms part of the central protuberance. In the 70S ribosome it contacts protein S13 of the 30S subunit (bridge B1b), connecting the 2 subunits; this bridge is implicated in subunit movement. Contacts the P site tRNA; the 5S rRNA and some of its associated proteins might help stabilize positioning of ribosome-bound tRNAs. The polypeptide is Large ribosomal subunit protein uL5 (Dinoroseobacter shibae (strain DSM 16493 / NCIMB 14021 / DFL 12)).